Consider the following 347-residue polypeptide: Microtubule-associated protein Jupiter (347 aa).

A compositionally biased stretch (polar residues) spans 1–14 (MISNFDCTDNQASS). The tract at residues 1-33 (MISNFDCTDNQASSKVLRPPGGGSSDIFGSEMP) is disordered. Residue Ser-24 is modified to Phosphoserine. 2 positions are modified to phosphothreonine: Thr-35 and Thr-96. 3 positions are modified to phosphoserine: Ser-105, Ser-134, and Ser-145. Disordered stretches follow at residues 127-193 (HYNG…PTPP) and 303-347 (GNPV…SGLW). Residues 132–145 (SGSVSSASSSVSSS) are compositionally biased toward low complexity. Residues 146–164 (TENLKMNSGSRSVFRNMST) show a composition bias toward polar residues. Residues 181-193 (PPSPVPIEVPTPP) show a composition bias toward pro residues.

The protein belongs to the MAP Jupiter family.

Its subcellular location is the nucleus. The protein resides in the cytoplasm. The protein localises to the cytoskeleton. It is found in the spindle. Functionally, binds to all microtubule populations. The sequence is that of Microtubule-associated protein Jupiter from Drosophila yakuba (Fruit fly).